The sequence spans 394 residues: HORMA domain-containing protein 1 (394 aa).

Residues 24 to 226 (HQSLVLVKRL…TPFHIFKVKV (203 aa)) form the HORMA domain. Over residues 253 to 282 (ILRDKDVEDEQEHYTSDDLDIETKMEEQEK) the composition is skewed to basic and acidic residues. Residues 253-394 (ILRDKDVEDE…RKFSEPKEHI (142 aa)) are disordered. Positions 288–300 (ELEEPSLVCEEDE) are enriched in acidic residues. Polar residues-rich tracts occupy residues 310 to 324 (LSIS…VNKT) and 343 to 352 (KMANGNQPVK). Positions 362–374 (QHESGRIVLHHFD) are enriched in basic and acidic residues. S376 carries the post-translational modification Phosphoserine. The short motif at 383 to 386 (KRRK) is the Nuclear localization signal element.

In terms of assembly, interacts with HORMAD2. Interacts with IHO1. In terms of processing, phosphorylated at Ser-377 in a SPO11-dependent manner. Testis-specific. Over-expressed in carcinomas.

Its subcellular location is the nucleus. It is found in the chromosome. Plays a key role in meiotic progression. Regulates 3 different functions during meiosis: ensures that sufficient numbers of processed DNA double-strand breaks (DSBs) are available for successful homology search by increasing the steady-state numbers of single-stranded DSB ends. Promotes synaptonemal-complex formation independently of its role in homology search. Plays a key role in the male mid-pachytene checkpoint and the female meiotic prophase checkpoint: required for efficient build-up of ATR activity on unsynapsed chromosome regions, a process believed to form the basis of meiotic silencing of unsynapsed chromatin (MSUC) and meiotic prophase quality control in both sexes. This Homo sapiens (Human) protein is HORMA domain-containing protein 1.